The following is a 358-amino-acid chain: C-X-C chemokine receptor type 4 (358 aa).

The important for chemokine binding and signaling stretch occupies residues 1 to 25 (MDGFSGGIDINIFDSNSTENGSGDF). At 1 to 44 (MDGFSGGIDINIFDSNSTENGSGDFEDFSEPCFMHDNSDFNRIF) the chain is on the extracellular side. N-linked (GlcNAc...) asparagine glycans are attached at residues N16 and N20. 2 cysteine pairs are disulfide-bonded: C32/C281 and C113/C190. The helical transmembrane segment at 45 to 67 (LPTIYSFIFLLGIIGNGLVVVVM) threads the bilayer. Residues 68–81 (GYQKKSRTMTDKYR) lie on the Cytoplasmic side of the membrane. Residues 82–103 (LHLSVADLLFVFTLPFWSVDAA) form a helical membrane-spanning segment. The chemokine binding stretch occupies residues 98 to 101 (WSVD). Residues 104–114 (IGWYFKEFLCK) are Extracellular-facing. The helical transmembrane segment at 115-134 (AVHVIYTVNLYSSVLILAFI) threads the bilayer. Positions 117-121 (HVIYT) are chemokine binding. The Cytoplasmic portion of the chain corresponds to 135 to 158 (SLDRYLAIVHATNSQGSRKMLADK). The interval 139 to 151 (YLAIVHATNSQGS) is involved in dimerization; when bound to chemokine. A helical transmembrane segment spans residues 159 to 178 (VVYAGVWLPALLLTVPDLVF). The Extracellular portion of the chain corresponds to 179 to 202 (ARVSDENGQFVCDRIYPIDNRETW). The segment at 190–194 (CDRIY) is chemokine binding, important for signaling. The chain crosses the membrane as a helical span at residues 203–223 (TVGFRFLHITVGLILPGLIIL). The Cytoplasmic segment spans residues 224-248 (ICYCVIISKLSHSKGHQKRKALKTT). A helical transmembrane segment spans residues 249-268 (VILILAFFACWLPYYVCLTT). At 269-289 (DTFMLLGLLKADCIWENTLHK) the chain is on the extracellular side. Residues 290–309 (AISITEALAFFHCCLNPILY) form a helical membrane-spanning segment. The Cytoplasmic segment spans residues 310–358 (AFLGAKFKTSAQNAFTSVSRGSSLKILSKKRAGLSSVSTESESSSFHSS). Residues 338 to 358 (KKRAGLSSVSTESESSSFHSS) are disordered. A compositionally biased stretch (low complexity) spans 344–358 (SSVSTESESSSFHSS).

This sequence belongs to the G-protein coupled receptor 1 family. In terms of assembly, monomer. Can form dimers. Post-translationally, sulfation is required for efficient binding of cxcl12/sdf-1alpha and promotes its dimerization. In terms of processing, O- and N-glycosylated.

It localises to the cell membrane. The protein localises to the cytoplasm. It is found in the nucleus. Its subcellular location is the early endosome. The protein resides in the late endosome. It localises to the lysosome. Receptor for the C-X-C chemokine cxcl12/sdf-1. Transduces a signal by increasing the intracellular calcium ion level. Signaling with cxcl12/sdf-1 mediates the directional movement of mesodermal cells during gastrulation. May play a role in the migration of embryonic presumptive primordial germ cells (pPGCs). May also be involved in regulating migration of hematopoietic stem cells into the larval liver. The protein is C-X-C chemokine receptor type 4 of Xenopus tropicalis (Western clawed frog).